Consider the following 474-residue polypeptide: Na(+)/H(+) antiporter NhaA 3 (474 aa).

Helical transmembrane passes span 31–51 (VGGV…NIPA), 73–93 (LSVA…VAGI), 110–130 (AALP…VYTV), 141–161 (GWAV…AVIG), 171–191 (FLLT…AVFF), 194–214 (TLNF…WLLL), 220–240 (GWYV…NSGV), 280–300 (LAVP…GALA), 309–329 (LGVV…GTWL), 347–367 (VFAV…IGEL), and 378–398 (EVKA…TVLL).

This sequence belongs to the NhaA Na(+)/H(+) (TC 2.A.33) antiporter family.

The protein localises to the cell membrane. It carries out the reaction Na(+)(in) + 2 H(+)(out) = Na(+)(out) + 2 H(+)(in). Functionally, na(+)/H(+) antiporter that extrudes sodium in exchange for external protons. In Streptomyces coelicolor (strain ATCC BAA-471 / A3(2) / M145), this protein is Na(+)/H(+) antiporter NhaA 3.